Consider the following 100-residue polypeptide: Urease subunit gamma (100 aa).

The protein belongs to the urease gamma subunit family. As to quaternary structure, heterotrimer of UreA (gamma), UreB (beta) and UreC (alpha) subunits. Three heterotrimers associate to form the active enzyme.

Its subcellular location is the cytoplasm. It catalyses the reaction urea + 2 H2O + H(+) = hydrogencarbonate + 2 NH4(+). It functions in the pathway nitrogen metabolism; urea degradation; CO(2) and NH(3) from urea (urease route): step 1/1. This Prochlorococcus marinus (strain MIT 9215) protein is Urease subunit gamma.